A 215-amino-acid chain; its full sequence is S-crystallin 3 (215 aa).

The GST N-terminal domain maps to 2–80 (PSYTLHYFNH…YLAREFGYHG (79 aa)). Residues 82-215 (SNMEMARVDF…YLKKRCRTDF (134 aa)) form the GST C-terminal domain.

This sequence belongs to the GST superfamily. As to expression, lens.

Its function is as follows. S-crystallins are structural components of squids and octopi eye lens. Contains relatively little if any GST activity. In Enteroctopus dofleini (North Pacific giant octopus), this protein is S-crystallin 3.